The primary structure comprises 554 residues: MLO-like protein 14 (554 aa).

Residues 1 to 13 (MREETEPSERTLG) are Extracellular-facing. Residues 14-34 (LTPTWSVATVLTIFVFVSLIV) form a helical membrane-spanning segment. The Cytoplasmic segment spans residues 35–63 (ERSIHRLSNWLQKTKRKPLFAALEKMKEE). Residues 64 to 84 (LMLLGFISLLLTATSSTIANI) form a helical membrane-spanning segment. Residues 85–158 (CVSSSFHNDR…SYEGMEQLHR (74 aa)) are Extracellular-facing. A helical transmembrane segment spans residues 159–179 (FIFIMAVTHVTYSCLTMLLAI). Residues 180–281 (VKIHRWRIWE…MIRSMEEEFQ (102 aa)) are Cytoplasmic-facing. A helical membrane pass occupies residues 282-302 (KIVGVSGPLWGFVVGFMLFNI). Position 303 (lysine 303) is a topological domain, extracellular. A helical transmembrane segment spans residues 304–324 (GSNLYFWLAIIPITLVLLVGA). Topologically, residues 325–366 (KLQHVIATLALENASITEYASGIKLRPRDELFWFKKPELLLS) are cytoplasmic. A helical transmembrane segment spans residues 367 to 387 (LIHFIQFQNAFELASFFWFWW). Residues 388 to 406 (QFGYNSCFLRNHLLVYLRL) are Extracellular-facing. A helical transmembrane segment spans residues 407 to 427 (ILGFSGQFLCSYSTLPLYALV). Residues 428–554 (TQMGTNYKAA…SSSLPMRREC (127 aa)) lie on the Cytoplasmic side of the membrane. The calmodulin-binding stretch occupies residues 441 to 462 (QRVRETINGWGKATRRKRRHGL).

Belongs to the MLO family.

The protein localises to the membrane. Functionally, may be involved in modulation of pathogen defense and leaf cell death. Activity seems to be regulated by Ca(2+)-dependent calmodulin binding and seems not to require heterotrimeric G proteins. The sequence is that of MLO-like protein 14 (MLO14) from Arabidopsis thaliana (Mouse-ear cress).